Reading from the N-terminus, the 539-residue chain is Glutamate/serine transporter AimA (539 aa).

Helical transmembrane passes span 11 to 31 (FSLM…FGAW), 36 to 56 (IAGP…LFIA), 82 to 102 (SFIG…VIPV), 137 to 157 (AFAS…VNLF), 164 to 184 (ITIF…FVGF), 199 to 219 (GWAS…FNGF), 238 to 258 (IAVV…QIAF), 283 to 303 (LAIA…AFVS), 350 to 370 (LIVS…AEII), 401 to 421 (LKGL…VLYW), 424 to 444 (WPLT…YFYY), 457 to 477 (FKAG…SYLG), and 486 to 506 (VIHY…FYVW).

The protein belongs to the amino acid-polyamine-organocation (APC) superfamily. AGT (TC 2.A.3.11) family.

The protein localises to the cell membrane. Functionally, major glutamate and serine transporter. Cannot transport threonine. AimA is the major glutamate transporter under standard growth conditions when glutamate is not limiting in the medium. This Bacillus subtilis (strain 168) protein is Glutamate/serine transporter AimA.